A 134-amino-acid chain; its full sequence is Profilin-2 (134 aa).

An intrachain disulfide couples Cys13 to Cys118. The Involved in PIP2 interaction signature appears at 84-100 (AVIRGKKGSGGITIKKT). Residue Thr114 is modified to Phosphothreonine.

The protein belongs to the profilin family. Occurs in many kinds of cells as a complex with monomeric actin in a 1:1 ratio. In terms of processing, phosphorylated by MAP kinases.

The protein localises to the cytoplasm. It localises to the cytoskeleton. Binds to actin and affects the structure of the cytoskeleton. At high concentrations, profilin prevents the polymerization of actin, whereas it enhances it at low concentrations. The protein is Profilin-2 of Olea europaea (Common olive).